Consider the following 378-residue polypeptide: Peptide chain release factor RF2 (378 aa).

Residue Q253 is modified to N5-methylglutamine.

Belongs to the prokaryotic/mitochondrial release factor family. Interacts with the ribosome. Interacts with ribosomal protein L11. Recruited to stalled E.coli ribosomes by E.coli ArfA.

It localises to the cytoplasm. Its function is as follows. Peptide chain release factor 2 directs the termination of translation in response to the peptide chain termination codons UGA and UAA. In endogenous ribosomes interacts with P-site tRNA and 23S rRNA. In the presence of truncated mRNA in the 70S ribosome, ArfA and RF2 interact such that the GGQ peptide hydrolysis motif of RF2 rises into the peptidyl-transferase center and releases the ribosome. Recruited to stalled E.coli 70S ribosomes by E.coli ArfA, but cannot be functionally accomodated in the peptidyl-transferase center. Note T.thermophilus probably does not encode arfA. The polypeptide is Peptide chain release factor RF2 (prfB) (Thermus thermophilus (strain ATCC 27634 / DSM 579 / HB8)).